The chain runs to 428 residues: Tyrosine--tRNA ligase (428 aa).

Residue Tyr41 coordinates L-tyrosine. Positions 46-55 (PTADSLHLGH) match the 'HIGH' region motif. L-tyrosine-binding residues include Tyr179 and Gln183. A 'KMSKS' region motif is present at residues 239 to 243 (KFGKT). Lys242 contributes to the ATP binding site. Residues 361–418 (ADLMQALVDAELQPSRGQARKTIASNAVTINGEKQSDPEYIFNDEDRLFGRYTLLRRG) enclose the S4 RNA-binding domain.

It belongs to the class-I aminoacyl-tRNA synthetase family. TyrS type 1 subfamily. In terms of assembly, homodimer.

The protein localises to the cytoplasm. It carries out the reaction tRNA(Tyr) + L-tyrosine + ATP = L-tyrosyl-tRNA(Tyr) + AMP + diphosphate + H(+). Catalyzes the attachment of tyrosine to tRNA(Tyr) in a two-step reaction: tyrosine is first activated by ATP to form Tyr-AMP and then transferred to the acceptor end of tRNA(Tyr). This is Tyrosine--tRNA ligase from Salmonella paratyphi C (strain RKS4594).